The sequence spans 465 residues: Ribulose bisphosphate carboxylase large chain (465 aa).

Lys-4 carries the post-translational modification N6,N6,N6-trimethyllysine. The substrate site is built by Asn-113 and Thr-163. Catalysis depends on Lys-165, which acts as the Proton acceptor. Position 167 (Lys-167) interacts with substrate. Lys-191, Asp-193, and Glu-194 together coordinate Mg(2+). Lys-191 carries the N6-carboxylysine modification. Catalysis depends on His-284, which acts as the Proton acceptor. The substrate site is built by Arg-285, His-317, and Ser-369.

The protein belongs to the RuBisCO large chain family. Type I subfamily. Heterohexadecamer of 8 large chains and 8 small chains; disulfide-linked. The disulfide link is formed within the large subunit homodimers. Requires Mg(2+) as cofactor. Post-translationally, the disulfide bond which can form in the large chain dimeric partners within the hexadecamer appears to be associated with oxidative stress and protein turnover.

The protein resides in the plastid. The protein localises to the chloroplast. The catalysed reaction is 2 (2R)-3-phosphoglycerate + 2 H(+) = D-ribulose 1,5-bisphosphate + CO2 + H2O. The enzyme catalyses D-ribulose 1,5-bisphosphate + O2 = 2-phosphoglycolate + (2R)-3-phosphoglycerate + 2 H(+). Functionally, ruBisCO catalyzes two reactions: the carboxylation of D-ribulose 1,5-bisphosphate, the primary event in carbon dioxide fixation, as well as the oxidative fragmentation of the pentose substrate in the photorespiration process. Both reactions occur simultaneously and in competition at the same active site. The polypeptide is Ribulose bisphosphate carboxylase large chain (Cornus oblonga).